Consider the following 138-residue polypeptide: Superoxide dismutase [Mn] (138 aa).

The Mn(2+) site is built by Ser-1, His-49, Asp-133, and His-137.

The protein belongs to the iron/manganese superoxide dismutase family. It depends on Mn(2+) as a cofactor.

The enzyme catalyses 2 superoxide + 2 H(+) = H2O2 + O2. Functionally, destroys superoxide anion radicals which are normally produced within the cells and which are toxic to biological systems. The chain is Superoxide dismutase [Mn] (sodA) from Mycobacterium marinum.